Here is a 396-residue protein sequence, read N- to C-terminus: MSGPQHITILGATGSIGLSTLDVVARHPSRYQVFALTGFSRLDELLALCVRHTPQYAVVPDQFVARKLQDDLAAAVLDTRVLVGEGGLCEVAAHPRVDAVMAAIVGAAGLRPTLAAVEAGKKVLLANKEALVMSGDLFMQAVRQSGAVLLPIDSEHNAIFQCLPGDFARGLGAVGVRRIMLTASGGPFRETPLEQLQNVTPEQACAHPVWSMGRKISVDSATMMNKGLELIEACWLFDARPDQVEVVIHPQSVIHSLVDYVDGSVLAQLGNPDMRTPIANALAWPARVDSGVAPLDLFRIGQLDFQKPDEERFPCLRLARHAAEAGGSAPAMLNAANEVAVAAFLDGRIRYLEIAGIIEEVLNHEPVTAVEGLDAVFAADAKARLLAGQWLERNAR.

5 residues coordinate NADPH: threonine 13, glycine 14, serine 15, isoleucine 16, and asparagine 127. Lysine 128 is a 1-deoxy-D-xylulose 5-phosphate binding site. Residue glutamate 129 coordinates NADPH. Aspartate 153 serves as a coordination point for Mn(2+). Residues serine 154, glutamate 155, serine 184, and histidine 207 each coordinate 1-deoxy-D-xylulose 5-phosphate. Glutamate 155 lines the Mn(2+) pocket. Glycine 213 provides a ligand contact to NADPH. Serine 220, asparagine 225, lysine 226, and glutamate 229 together coordinate 1-deoxy-D-xylulose 5-phosphate. Glutamate 229 is a binding site for Mn(2+).

Belongs to the DXR family. Requires Mg(2+) as cofactor. Mn(2+) serves as cofactor.

It catalyses the reaction 2-C-methyl-D-erythritol 4-phosphate + NADP(+) = 1-deoxy-D-xylulose 5-phosphate + NADPH + H(+). Its pathway is isoprenoid biosynthesis; isopentenyl diphosphate biosynthesis via DXP pathway; isopentenyl diphosphate from 1-deoxy-D-xylulose 5-phosphate: step 1/6. Catalyzes the NADPH-dependent rearrangement and reduction of 1-deoxy-D-xylulose-5-phosphate (DXP) to 2-C-methyl-D-erythritol 4-phosphate (MEP). This Pseudomonas savastanoi pv. phaseolicola (strain 1448A / Race 6) (Pseudomonas syringae pv. phaseolicola (strain 1448A / Race 6)) protein is 1-deoxy-D-xylulose 5-phosphate reductoisomerase.